The following is a 569-amino-acid chain: Glutamate--tRNA ligase (569 aa).

Residues 110 to 120 carry the 'HIGH' region motif; that stretch reads PNPNGPPTLGS.

The protein belongs to the class-I aminoacyl-tRNA synthetase family. Glutamate--tRNA ligase type 2 subfamily.

It is found in the cytoplasm. It catalyses the reaction tRNA(Glu) + L-glutamate + ATP = L-glutamyl-tRNA(Glu) + AMP + diphosphate. Catalyzes the attachment of glutamate to tRNA(Glu) in a two-step reaction: glutamate is first activated by ATP to form Glu-AMP and then transferred to the acceptor end of tRNA(Glu). The sequence is that of Glutamate--tRNA ligase from Methanococcoides burtonii (strain DSM 6242 / NBRC 107633 / OCM 468 / ACE-M).